The primary structure comprises 472 residues: 2-oxoglutarate carboxylase small subunit (472 aa).

The Biotin carboxylation domain occupies 1-445 (MFKKVLVANR…TTRYLEEHPH (445 aa)). The ATP site is built by lysine 115 and glutamate 199. An ATP-grasp domain is found at 119–316 (KEVMKRAGVP…IVKWQIRIAA (198 aa)). Arginine 291 is an active-site residue.

Heterohexadecamer of 8 large subunits and 8 small subunits. The cofactor is Mg(2+). Mn(2+) is required as a cofactor. It depends on Co(2+) as a cofactor.

It carries out the reaction hydrogencarbonate + 2-oxoglutarate + ATP = (S)-oxalosuccinate + ADP + phosphate + H(+). This Hydrogenobacter thermophilus (strain DSM 6534 / IAM 12695 / TK-6) protein is 2-oxoglutarate carboxylase small subunit.